We begin with the raw amino-acid sequence, 546 residues long: uncharacterized protein (546 aa).

A run of 5 helical transmembrane segments spans residues Ile-4–Leu-23, Gly-30–Ser-47, Ile-57–Val-79, Ala-91–Phe-113, and Pro-155–Val-177. RCK C-terminal domains lie at Gly-189–Glu-274 and Val-275–Asp-359. The next 6 membrane-spanning stretches (helical) occupy residues Phe-372–Thr-394, Phe-399–Trp-421, Ile-434–Ala-456, Gly-460–Gly-482, Pro-489–Leu-511, and Ile-521–Thr-543.

It belongs to the AAE transporter (TC 2.A.81) family.

Its subcellular location is the cell membrane. This is an uncharacterized protein from Geobacter sulfurreducens (strain ATCC 51573 / DSM 12127 / PCA).